Here is a 413-residue protein sequence, read N- to C-terminus: Serine hydroxymethyltransferase (413 aa).

(6S)-5,6,7,8-tetrahydrofolate is bound by residues Leu119 and 123-125; that span reads GHL. Residue Lys228 is modified to N6-(pyridoxal phosphate)lysine.

This sequence belongs to the SHMT family. Homodimer. It depends on pyridoxal 5'-phosphate as a cofactor.

Its subcellular location is the cytoplasm. It carries out the reaction (6R)-5,10-methylene-5,6,7,8-tetrahydrofolate + glycine + H2O = (6S)-5,6,7,8-tetrahydrofolate + L-serine. It functions in the pathway one-carbon metabolism; tetrahydrofolate interconversion. The protein operates within amino-acid biosynthesis; glycine biosynthesis; glycine from L-serine: step 1/1. In terms of biological role, catalyzes the reversible interconversion of serine and glycine with tetrahydrofolate (THF) serving as the one-carbon carrier. This reaction serves as the major source of one-carbon groups required for the biosynthesis of purines, thymidylate, methionine, and other important biomolecules. Also exhibits THF-independent aldolase activity toward beta-hydroxyamino acids, producing glycine and aldehydes, via a retro-aldol mechanism. The chain is Serine hydroxymethyltransferase from Desulfatibacillum aliphaticivorans.